The following is a 752-amino-acid chain: Photosystem I P700 chlorophyll a apoprotein A1 (752 aa).

The next 8 helical transmembrane spans lie at 73 to 96 (IFSA…FHGA), 159 to 182 (LYWT…FHYH), 198 to 222 (MNHH…HISL), 294 to 312 (TAHH…GHMY), 349 to 372 (WHAQ…HHMY), 388 to 414 (LSLF…IFMV), 436 to 458 (AIIS…LYIH), and 533 to 551 (FLVH…LILL). [4Fe-4S] cluster is bound by residues Cys-575 and Cys-584. The next 2 helical transmembrane spans lie at 591–612 (HIFL…HFSW) and 666–688 (LSAY…MFLF). His-677 lines the chlorophyll a' pocket. Residues Met-685 and Tyr-693 each contribute to the chlorophyll a site. Position 694 (Trp-694) interacts with phylloquinone. Residues 726-746 (AVGLAHYLLGGIGTTWSFFLA) form a helical membrane-spanning segment.

Belongs to the PsaA/PsaB family. As to quaternary structure, the PsaA/B heterodimer binds the P700 chlorophyll special pair and subsequent electron acceptors. PSI consists of a core antenna complex that captures photons, and an electron transfer chain that converts photonic excitation into a charge separation. The eukaryotic PSI reaction center is composed of at least 11 subunits. P700 is a chlorophyll a/chlorophyll a' dimer, A0 is one or more chlorophyll a, A1 is one or both phylloquinones and FX is a shared 4Fe-4S iron-sulfur center. serves as cofactor.

It localises to the plastid. The protein localises to the chloroplast thylakoid membrane. The enzyme catalyses reduced [plastocyanin] + hnu + oxidized [2Fe-2S]-[ferredoxin] = oxidized [plastocyanin] + reduced [2Fe-2S]-[ferredoxin]. Its function is as follows. PsaA and PsaB bind P700, the primary electron donor of photosystem I (PSI), as well as the electron acceptors A0, A1 and FX. PSI is a plastocyanin/cytochrome c6-ferredoxin oxidoreductase, converting photonic excitation into a charge separation, which transfers an electron from the donor P700 chlorophyll pair to the spectroscopically characterized acceptors A0, A1, FX, FA and FB in turn. Oxidized P700 is reduced on the lumenal side of the thylakoid membrane by plastocyanin or cytochrome c6. This is Photosystem I P700 chlorophyll a apoprotein A1 from Emiliania huxleyi (Coccolithophore).